The primary structure comprises 968 residues: Dynein axonemal intermediate chain 3 (968 aa).

Basic and acidic residues predominate over residues M1–E33. Disordered regions lie at residues M1 to P39 and K136 to Q166. The segment covering G141–E157 has biased composition (acidic residues). 3 WD repeats span residues E407 to Q447, G480 to H536, and V712 to S753. Positions L830–R857 form a coiled coil. The segment covering K897–E919 has biased composition (basic and acidic residues). The interval K897–V930 is disordered.

In terms of assembly, part of the multisubunit axonemal dynein complex formed at least of two heavy chains and a number of intermediate and light chains.

The protein localises to the cytoplasm. Functionally, may be involved in the regulation of cilia function. The sequence is that of Dynein axonemal intermediate chain 3 (dnai3) from Danio rerio (Zebrafish).